Reading from the N-terminus, the 391-residue chain is 1-deoxy-D-xylulose 5-phosphate reductoisomerase (391 aa).

The NADPH site is built by T10, G11, S12, I13, N38, and N122. K123 contributes to the 1-deoxy-D-xylulose 5-phosphate binding site. E124 serves as a coordination point for NADPH. D148 is a binding site for Mn(2+). 1-deoxy-D-xylulose 5-phosphate contacts are provided by S149, E150, S173, and H196. E150 is a Mn(2+) binding site. G202 provides a ligand contact to NADPH. 1-deoxy-D-xylulose 5-phosphate-binding residues include S209, N214, K215, and E218. E218 is a Mn(2+) binding site.

It belongs to the DXR family. Mg(2+) is required as a cofactor. Requires Mn(2+) as cofactor.

It carries out the reaction 2-C-methyl-D-erythritol 4-phosphate + NADP(+) = 1-deoxy-D-xylulose 5-phosphate + NADPH + H(+). It participates in isoprenoid biosynthesis; isopentenyl diphosphate biosynthesis via DXP pathway; isopentenyl diphosphate from 1-deoxy-D-xylulose 5-phosphate: step 1/6. Its function is as follows. Catalyzes the NADPH-dependent rearrangement and reduction of 1-deoxy-D-xylulose-5-phosphate (DXP) to 2-C-methyl-D-erythritol 4-phosphate (MEP). The chain is 1-deoxy-D-xylulose 5-phosphate reductoisomerase from Wolbachia pipientis subsp. Culex pipiens (strain wPip).